The sequence spans 263 residues: 3'-5' ssDNA/RNA exonuclease TatD (263 aa).

Residues E91, H127, and H152 each coordinate a divalent metal cation.

The protein belongs to the metallo-dependent hydrolases superfamily. TatD-type hydrolase family. TatD subfamily. In terms of assembly, monomer. Mg(2+) serves as cofactor.

It is found in the cytoplasm. Its function is as follows. 3'-5' exonuclease that prefers single-stranded DNA and RNA. May play a role in the H(2)O(2)-induced DNA damage repair. In Cronobacter turicensis (strain DSM 18703 / CCUG 55852 / LMG 23827 / z3032), this protein is 3'-5' ssDNA/RNA exonuclease TatD.